The primary structure comprises 210 residues: MMKANFIVVEGLEGAGKSTAIKTVLDTLKAAGIENIVNTREPGGTPLAEKMRGLVKEEHEGEDLKDMTELLLLYAARVQLVENVIKPALANDQWVVGDRHDLSSQAYQGGGRQIDASLMKNLRDTTLGEFKPAFTLYMDIDPRVGLERARGRGELDRIEKMDISFFERTRERYLELANADDSIVIINAEQSIEDVAQDIKAALNKWLAAQ.

Residue 11–18 (GLEGAGKS) coordinates ATP.

It belongs to the thymidylate kinase family.

The enzyme catalyses dTMP + ATP = dTDP + ADP. Functionally, phosphorylation of dTMP to form dTDP in both de novo and salvage pathways of dTTP synthesis. The polypeptide is Thymidylate kinase (Vibrio campbellii (strain ATCC BAA-1116)).